The primary structure comprises 334 residues: 3-keto-steroid reductase/17-beta-hydroxysteroid dehydrogenase 7 (334 aa).

Residues 1–229 (MRKVVLITGA…VTCPGVVMTN (229 aa)) are Extracellular-facing. 8–15 (TGASSGIG) provides a ligand contact to NAD(+). A glycan (N-linked (GlcNAc...) asparagine) is linked at asparagine 37. Serine 171 contacts substrate. The N-linked (GlcNAc...) asparagine glycan is linked to asparagine 178. Catalysis depends on tyrosine 193, which acts as the Proton acceptor. N-linked (GlcNAc...) asparagine glycosylation occurs at asparagine 229. The helical transmembrane segment at 230–250 (LTYGILPPFVWTLLLPVIWLL) threads the bilayer. The Cytoplasmic segment spans residues 251 to 334 (RFFAHAFTVT…ITIQKSDHHS (84 aa)).

This sequence belongs to the short-chain dehydrogenases/reductases (SDR) family. ERG27 subfamily. In terms of assembly, binds to the short form of prolactin receptor. In terms of processing, phosphorylated. In terms of tissue distribution, most abundant in ovaries of pregnant animals.

The protein resides in the endoplasmic reticulum membrane. The enzyme catalyses 17beta-estradiol + NADP(+) = estrone + NADPH + H(+). It catalyses the reaction a 3beta-hydroxysteroid + NADP(+) = a 3-oxosteroid + NADPH + H(+). The catalysed reaction is 4alpha-methyl-5alpha-cholest-7-en-3beta-ol + NADP(+) = 4alpha-methyl-5alpha-cholest-7-en-3-one + NADPH + H(+). It carries out the reaction 4alpha-methyl-5alpha-cholest-8-en-3-one + NADPH + H(+) = 4alpha-methyl-5alpha-cholest-8-en-3beta-ol + NADP(+). The enzyme catalyses 3-dehydro-4alpha-methylzymosterol + NADPH + H(+) = 4alpha-methylzymosterol + NADP(+). It catalyses the reaction zymosterone + NADPH + H(+) = zymosterol + NADP(+). The catalysed reaction is 5alpha-cholest-8-en-3-one + NADPH + H(+) = 5alpha-cholest-8-en-3beta-ol + NADP(+). It carries out the reaction 5alpha-androstane-3beta,17beta-diol + NADP(+) = 17beta-hydroxy-5alpha-androstan-3-one + NADPH + H(+). The enzyme catalyses 5alpha-androstane-3alpha,17beta-diol + NADP(+) = 17beta-hydroxy-5alpha-androstan-3-one + NADPH + H(+). The protein operates within steroid biosynthesis; estrogen biosynthesis. It functions in the pathway steroid biosynthesis; zymosterol biosynthesis; zymosterol from lanosterol: step 5/6. Bifunctional enzyme involved in steroid-hormone metabolism and cholesterol biosynthesis. Catalyzes the NADP(H)-dependent reduction of estrogens and androgens and regulates the biological potency of these steroids. Converts estrone (E1) to a more potent estrogen, 17beta-estradiol (E2). Converts dihydrotestosterone (DHT) to an inactive form. Also participates in the post-squalene cholesterol biosynthesis, as a 3-ketosteroid reductase. The chain is 3-keto-steroid reductase/17-beta-hydroxysteroid dehydrogenase 7 (Hsd17b7) from Rattus norvegicus (Rat).